A 93-amino-acid polypeptide reads, in one-letter code: Sec-independent protein translocase protein TatA (93 aa).

The helical transmembrane segment at 1 to 21 threads the bilayer; the sequence is MGIFDWKHWIVILVVVVLVFG. Positions 43–93 are disordered; the sequence is MNDDEKPAEPVVPPAAQPVPPVQPQQSAPLNQPHTIDVQAQKVEEPTRKDS. The segment covering 52-65 has biased composition (pro residues); that stretch reads PVVPPAAQPVPPVQ. Residues 84–93 are compositionally biased toward basic and acidic residues; the sequence is KVEEPTRKDS.

Belongs to the TatA/E family. As to quaternary structure, the Tat system comprises two distinct complexes: a TatABC complex, containing multiple copies of TatA, TatB and TatC subunits, and a separate TatA complex, containing only TatA subunits. Substrates initially bind to the TatABC complex, which probably triggers association of the separate TatA complex to form the active translocon.

It is found in the cell inner membrane. Its function is as follows. Part of the twin-arginine translocation (Tat) system that transports large folded proteins containing a characteristic twin-arginine motif in their signal peptide across membranes. TatA could form the protein-conducting channel of the Tat system. The polypeptide is Sec-independent protein translocase protein TatA (Pseudomonas fluorescens (strain ATCC BAA-477 / NRRL B-23932 / Pf-5)).